Here is a 374-residue protein sequence, read N- to C-terminus: Protein RecA (374 aa).

66–73 (GPESSGKT) lines the ATP pocket. The disordered stretch occupies residues 327–374 (LGVGVHPEESATEPGADAASAAPADAAPAVPAPTTAKATKSKAAAAKS). The segment covering 338-374 (TEPGADAASAAPADAAPAVPAPTTAKATKSKAAAAKS) has biased composition (low complexity).

The protein belongs to the RecA family.

It localises to the cytoplasm. Its function is as follows. Can catalyze the hydrolysis of ATP in the presence of single-stranded DNA, the ATP-dependent uptake of single-stranded DNA by duplex DNA, and the ATP-dependent hybridization of homologous single-stranded DNAs. It interacts with LexA causing its activation and leading to its autocatalytic cleavage. This Streptomyces lividans protein is Protein RecA.